Consider the following 122-residue polypeptide: Insulin-like growth factor 1 (122 aa).

Residues 49–77 are b; it reads GPETLCGAELVDALQFVCGDRGFYFNKPT. Intrachain disulfides connect cysteine 54–cysteine 96, cysteine 66–cysteine 109, and cysteine 95–cysteine 100. The tract at residues 78–89 is c; that stretch reads GYGSSSRRAPQT. An a region spans residues 90–110; the sequence is GIVDECCFRSCDLRRLEMYCA. Residues 111–118 form a d region; it reads PLKPAKSA. Positions 119-122 are cleaved as a propeptide — e peptide; that stretch reads RSVR.

Belongs to the insulin family. In terms of assembly, forms a ternary complex with IGFR1 and ITGAV:ITGB3. Forms a ternary complex with IGFR1 and ITGA6:ITGB4. Forms a ternary complex with IGFBP3 and ALS.

The protein localises to the secreted. The insulin-like growth factors, isolated from plasma, are structurally and functionally related to insulin but have a much higher growth-promoting activity. May be a physiological regulator of [1-14C]-2-deoxy-D-glucose (2DG) transport and glycogen synthesis in osteoblasts. Stimulates glucose transport in bone-derived osteoblastic (PyMS) cells and is effective at much lower concentrations than insulin, not only regarding glycogen and DNA synthesis but also with regard to enhancing glucose uptake. May play a role in synapse maturation. Ca(2+)-dependent exocytosis of IGF1 is required for sensory perception of smell in the olfactory bulb. Acts as a ligand for IGF1R. Binds to the alpha subunit of IGF1R, leading to the activation of the intrinsic tyrosine kinase activity which autophosphorylates tyrosine residues in the beta subunit thus initiating a cascade of down-stream signaling events leading to activation of the PI3K-AKT/PKB and the Ras-MAPK pathways. Binds to integrins ITGAV:ITGB3 and ITGA6:ITGB4. Its binding to integrins and subsequent ternary complex formation with integrins and IGFR1 are essential for IGF1 signaling. Induces the phosphorylation and activation of IGFR1, MAPK3/ERK1, MAPK1/ERK2 and AKT1. As part of the MAPK/ERK signaling pathway, acts as a negative regulator of apoptosis in cardiomyocytes via promotion of STUB1/CHIP-mediated ubiquitination and degradation of ICER-type isoforms of CREM. The protein is Insulin-like growth factor 1 of Equus caballus (Horse).